Consider the following 271-residue polypeptide: Phosphatidylglycerol--prolipoprotein diacylglyceryl transferase (271 aa).

7 helical membrane-spanning segments follow: residues 25 to 45 (WYGI…KFFV), 60 to 80 (YFIW…ILIY), 103 to 123 (FVGI…IATL), 134 to 154 (WIFL…GRIG), 181 to 201 (PSQL…VYLA), 209 to 229 (GELI…CEFY), and 235 to 255 (GIGF…IMFI). Residue Arg152 participates in a 1,2-diacyl-sn-glycero-3-phospho-(1'-sn-glycerol) binding.

The protein belongs to the Lgt family.

The protein resides in the cell inner membrane. It catalyses the reaction L-cysteinyl-[prolipoprotein] + a 1,2-diacyl-sn-glycero-3-phospho-(1'-sn-glycerol) = an S-1,2-diacyl-sn-glyceryl-L-cysteinyl-[prolipoprotein] + sn-glycerol 1-phosphate + H(+). Its pathway is protein modification; lipoprotein biosynthesis (diacylglyceryl transfer). Its function is as follows. Catalyzes the transfer of the diacylglyceryl group from phosphatidylglycerol to the sulfhydryl group of the N-terminal cysteine of a prolipoprotein, the first step in the formation of mature lipoproteins. The chain is Phosphatidylglycerol--prolipoprotein diacylglyceryl transferase from Campylobacter jejuni subsp. jejuni serotype O:6 (strain 81116 / NCTC 11828).